We begin with the raw amino-acid sequence, 332 residues long: Probable L-asparaginase (332 aa).

Positions 6–332 constitute an Asparaginase/glutaminase domain; sequence PTIALLATGG…AKIQEMFEEY (327 aa). Threonine 16 acts as the O-isoaspartyl threonine intermediate in catalysis. Residues serine 62 and 95–96 each bind substrate; that span reads TD.

This sequence belongs to the asparaginase 1 family.

It localises to the cytoplasm. The catalysed reaction is L-asparagine + H2O = L-aspartate + NH4(+). The chain is Probable L-asparaginase (ansA) from Helicobacter pylori (strain J99 / ATCC 700824) (Campylobacter pylori J99).